The primary structure comprises 298 residues: Porphobilinogen deaminase (298 aa).

Position 242 is an S-(dipyrrolylmethanemethyl)cysteine (Cys242).

Belongs to the HMBS family. In terms of assembly, monomer. The cofactor is dipyrromethane.

The catalysed reaction is 4 porphobilinogen + H2O = hydroxymethylbilane + 4 NH4(+). Its pathway is porphyrin-containing compound metabolism; protoporphyrin-IX biosynthesis; coproporphyrinogen-III from 5-aminolevulinate: step 2/4. Its function is as follows. Tetrapolymerization of the monopyrrole PBG into the hydroxymethylbilane pre-uroporphyrinogen in several discrete steps. The polypeptide is Porphobilinogen deaminase (Fusobacterium nucleatum subsp. nucleatum (strain ATCC 25586 / DSM 15643 / BCRC 10681 / CIP 101130 / JCM 8532 / KCTC 2640 / LMG 13131 / VPI 4355)).